We begin with the raw amino-acid sequence, 359 residues long: Nicotinate-nucleotide--dimethylbenzimidazole phosphoribosyltransferase (359 aa).

The active-site Proton acceptor is the glutamate 318.

This sequence belongs to the CobT family. In terms of assembly, homodimer.

It catalyses the reaction 5,6-dimethylbenzimidazole + nicotinate beta-D-ribonucleotide = alpha-ribazole 5'-phosphate + nicotinate + H(+). It functions in the pathway nucleoside biosynthesis; alpha-ribazole biosynthesis; alpha-ribazole from 5,6-dimethylbenzimidazole: step 1/2. In terms of biological role, catalyzes the synthesis of alpha-ribazole-5'-phosphate from nicotinate mononucleotide (NAMN) and 5,6-dimethylbenzimidazole (DMB). The protein is Nicotinate-nucleotide--dimethylbenzimidazole phosphoribosyltransferase of Escherichia coli (strain ATCC 8739 / DSM 1576 / NBRC 3972 / NCIMB 8545 / WDCM 00012 / Crooks).